The following is a 305-amino-acid chain: Putative monooxygenase p33MONOX (305 aa).

2 disordered regions span residues 1–20 (MASR…LGKM) and 37–56 (LEDP…VPWK). T44 carries the post-translational modification Phosphothreonine. A Flavin-containing monooxygenase motif motif is present at residues 67–77 (LAKVEEGEASL). Positions 159-305 (SGEITKEERQ…DLNVLTPTGF (147 aa)) are disordered. Over residues 169–183 (PASAQSTPSTTPHSS) the composition is skewed to low complexity. A Phosphothreonine modification is found at T175. Phosphoserine is present on residues S182 and S183. 2 stretches are compositionally biased toward polar residues: residues 191-210 (WFTS…TMDS) and 233-243 (KYDSGSSTTQA).

The protein belongs to the P33MONOX family. Interacts with NELFB, NOL12 and PRNP.

Its subcellular location is the cytoplasm. Potential NADPH-dependent oxidoreductase. May be involved in the regulation of neuronal survival, differentiation and axonal outgrowth. The chain is Putative monooxygenase p33MONOX (P33MONOX) from Pongo abelii (Sumatran orangutan).